Consider the following 132-residue polypeptide: Small ribosomal subunit protein uS8 (132 aa).

It belongs to the universal ribosomal protein uS8 family. In terms of assembly, part of the 30S ribosomal subunit. Contacts proteins S5 and S12.

Its function is as follows. One of the primary rRNA binding proteins, it binds directly to 16S rRNA central domain where it helps coordinate assembly of the platform of the 30S subunit. The chain is Small ribosomal subunit protein uS8 from Paenarthrobacter aurescens (strain TC1).